Consider the following 451-residue polypeptide: Glycine--tRNA ligase (451 aa).

Positions 99 and 168 each coordinate substrate. ATP is bound by residues arginine 200–glutamate 202, phenylalanine 210–phenylalanine 215, glutamate 284–leucine 285, and glycine 328–arginine 331. Position 215–219 (phenylalanine 215–glutamate 219) interacts with substrate. Residue glutamate 324–glycine 328 coordinates substrate.

The protein belongs to the class-II aminoacyl-tRNA synthetase family. As to quaternary structure, homodimer.

The protein resides in the cytoplasm. It carries out the reaction tRNA(Gly) + glycine + ATP = glycyl-tRNA(Gly) + AMP + diphosphate. Catalyzes the attachment of glycine to tRNA(Gly). In Mycoplasmopsis synoviae (strain 53) (Mycoplasma synoviae), this protein is Glycine--tRNA ligase.